A 267-amino-acid chain; its full sequence is 2-keto-3-deoxy-L-rhamnonate aldolase (267 aa).

The active-site Proton acceptor is the histidine 49. Glutamine 151 is a substrate binding site. Glutamate 153 lines the Mg(2+) pocket. The substrate site is built by alanine 178 and aspartate 179. Aspartate 179 contacts Mg(2+).

It belongs to the HpcH/HpaI aldolase family. KDR aldolase subfamily. Homohexamer. Mg(2+) is required as a cofactor.

It carries out the reaction 2-dehydro-3-deoxy-L-rhamnonate = (S)-lactaldehyde + pyruvate. Functionally, catalyzes the reversible retro-aldol cleavage of 2-keto-3-deoxy-L-rhamnonate (KDR) to pyruvate and lactaldehyde. The sequence is that of 2-keto-3-deoxy-L-rhamnonate aldolase from Escherichia coli (strain UTI89 / UPEC).